A 38-amino-acid chain; its full sequence is U9-ctenitoxin-Pk1a (38 aa).

Cystine bridges form between cysteine 2/cysteine 17, cysteine 9/cysteine 22, cysteine 16/cysteine 36, and cysteine 24/cysteine 34.

In terms of tissue distribution, expressed by the venom gland.

Its subcellular location is the secreted. The sequence is that of U9-ctenitoxin-Pk1a from Phoneutria keyserlingi (Brazilian wandering spider).